The following is a 156-amino-acid chain: Ribosomal RNA large subunit methyltransferase H (156 aa).

S-adenosyl-L-methionine contacts are provided by residues L73, G104, and 123-128 (VSSLTL).

Belongs to the RNA methyltransferase RlmH family. In terms of assembly, homodimer.

Its subcellular location is the cytoplasm. It catalyses the reaction pseudouridine(1915) in 23S rRNA + S-adenosyl-L-methionine = N(3)-methylpseudouridine(1915) in 23S rRNA + S-adenosyl-L-homocysteine + H(+). Specifically methylates the pseudouridine at position 1915 (m3Psi1915) in 23S rRNA. The polypeptide is Ribosomal RNA large subunit methyltransferase H (Paraburkholderia xenovorans (strain LB400)).